The primary structure comprises 39 residues: Sarcotoxin-1C (39 aa).

Arg-39 carries the post-translational modification Arginine amide.

This sequence belongs to the cecropin family.

It localises to the secreted. Its function is as follows. Sarcotoxins, which are potent bactericidal proteins, are produced in response to injury. They are cytotoxic to both Gram-positive and Gram-negative bacteria. The protein is Sarcotoxin-1C of Sarcophaga peregrina (Flesh fly).